We begin with the raw amino-acid sequence, 101 residues long: Ribonuclease kappa-B (101 aa).

The next 2 helical transmembrane spans lie at Ala-13 to Phe-33 and Val-68 to Cys-88.

Belongs to the RNase K family.

It is found in the membrane. Its function is as follows. Endoribonuclease which preferentially cleaves ApU and ApG phosphodiester bonds. The protein is Ribonuclease kappa-B (rnasekb) of Danio rerio (Zebrafish).